The following is a 309-amino-acid chain: Homoserine kinase (309 aa).

91–101 (PIGSGLGSSAC) is a binding site for ATP.

It belongs to the GHMP kinase family. Homoserine kinase subfamily.

The protein resides in the cytoplasm. It carries out the reaction L-homoserine + ATP = O-phospho-L-homoserine + ADP + H(+). It functions in the pathway amino-acid biosynthesis; L-threonine biosynthesis; L-threonine from L-aspartate: step 4/5. In terms of biological role, catalyzes the ATP-dependent phosphorylation of L-homoserine to L-homoserine phosphate. The protein is Homoserine kinase of Buchnera aphidicola subsp. Acyrthosiphon pisum (strain APS) (Acyrthosiphon pisum symbiotic bacterium).